We begin with the raw amino-acid sequence, 941 residues long: MASPRSSGQPGPPPPPPPPPARLLLLLLLPLLLPLAPGAWGWARGAPRPPPSSPPLSIMGLMPLTKEVAKGSIGRGVLPAVELAIEQIRNESLLRPYFLDLRLYDTECDNAKGLKAFYDAIKYGPNHLMVFGGVCPSVTSIIAESLQGWNLVQLSFAATTPVLADKKKYPYFFRTVPSDNAVNPAILKLLKHYQWKRVGTLTQDVQRFSEVRNDLTGVLYGEDIEISDTESFSNDPCTSVKKLKGNDVRIILGQFDQNMAAKVFCCAYEENMYGSKYQWIIPGWYEPSWWEQVHTEANSSRCLRKNLLAAMEGYIGVDFEPLSSKQIKTISGKTPQQYEREYNNKRSGVGPSKFHGYAYDGIWVIAKTLQRAMETLHASSRHQRIQDFNYTDHTLGRIILNAMNETNFFGVTGQVVFRNGERMGTIKFTQFQDSREVKVGEYNAVADTLEIINDTIRFQGSEPPKDKTIILEQLRKISLPLYSILSALTILGMIMASAFLFFNIKNRNQKLIKMSSPYMNNLIILGGMLSYASIFLFGLDGSFVSEKTFETLCTVRTWILTVGYTTAFGAMFAKTWRVHAIFKNVKMKKKIIKDQKLLVIVGGMLLIDLCILICWQAVDPLRRTVEKYSMEPDPAGRDISIRPLLEHCENTHMTIWLGIVYAYKGLLMLFGCFLAWETRNVSIPALNDSKYIGMSVYNVGIMCIIGAAVSFLTRDQPNVQFCIVALVIIFCSTITLCLVFVPKLITLRTNPDAATQNRRFQFTQNQKKEDSKTSTSVTSVNQASTSRLEGLQSENHRLRMKITELDKDLEEVTMQLQDTPEKTTYIKQNHYQELNDILNLGNFTESTDGGKAILKNHLDQNPQLQWNTTEPSRTCKDPIEDINSPEHIQRRLSLQLPILHHAYLPSIGGVDASCVSPCVSPTASPRHRHVPPSFRVMVSGL.

Positions Met1–Gly41 are cleaved as a signal peptide. At Trp42 to Ser483 the chain is on the extracellular side. Asn90 carries an N-linked (GlcNAc...) asparagine glycan. Cystine bridges form between Cys108-Cys135, Cys237-Cys266, and Cys265-Cys302. N-linked (GlcNAc...) asparagine glycans are attached at residues Asn298, Asn389, Asn404, and Asn453. Residues Ile484 to Ile504 traverse the membrane as a helical segment. Residues Lys505–Leu522 are Cytoplasmic-facing. Residues Ile523–Phe543 form a helical membrane-spanning segment. The Extracellular segment spans residues Val544 to Thr551. A helical transmembrane segment spans residues Leu552–Phe572. The Cytoplasmic portion of the chain corresponds to Ala573–Leu597. Residues Leu598–Val618 traverse the membrane as a helical segment. Residues Asp619 to Thr654 are Extracellular-facing. The helical transmembrane segment at Ile655–Ala675 threads the bilayer. Residues Trp676 to Tyr691 are Cytoplasmic-facing. A helical membrane pass occupies residues Ile692 to Leu712. Over Thr713–Gln720 the chain is Extracellular. Residues Phe721–Val741 form a helical membrane-spanning segment. The Cytoplasmic portion of the chain corresponds to Pro742 to Leu941. Positions Thr763–Gly790 are disordered. A compositionally biased stretch (polar residues) spans Thr773–Arg787. Phosphoserine occurs at positions 776 and 779. Residues Asn781 to Thr819 adopt a coiled-coil conformation. Thr819 carries the phosphothreonine modification. Phosphoserine is present on residues Ser884, Ser893, Ser913, Ser916, Ser920, and Ser924.

The protein belongs to the G-protein coupled receptor 3 family. GABA-B receptor subfamily. Heterodimer of GABBR1 and GABBR2. Homodimers may form, but are inactive. Interacts (via C-terminus) with ATF4 (via leucine zipper domain). Highly expressed in brain, especially in cerebral cortex, thalamus, hippocampus, frontal, occipital and temporal lobe, occipital pole and cerebellum, followed by corpus callosum, caudate nucleus, spinal cord, amygdala and medulla. Weakly expressed in heart, testis and skeletal muscle.

The protein resides in the cell membrane. The protein localises to the postsynaptic cell membrane. In terms of biological role, component of a heterodimeric G-protein coupled receptor for GABA, formed by GABBR1 and GABBR2. Within the heterodimeric GABA receptor, only GABBR1 seems to bind agonists, while GABBR2 mediates coupling to G proteins. Ligand binding causes a conformation change that triggers signaling via guanine nucleotide-binding proteins (G proteins) and modulates the activity of down-stream effectors, such as adenylate cyclase. Signaling inhibits adenylate cyclase, stimulates phospholipase A2, activates potassium channels, inactivates voltage-dependent calcium-channels and modulates inositol phospholipid hydrolysis. Plays a critical role in the fine-tuning of inhibitory synaptic transmission. Pre-synaptic GABA receptor inhibits neurotransmitter release by down-regulating high-voltage activated calcium channels, whereas postsynaptic GABA receptor decreases neuronal excitability by activating a prominent inwardly rectifying potassium (Kir) conductance that underlies the late inhibitory postsynaptic potentials. Not only implicated in synaptic inhibition but also in hippocampal long-term potentiation, slow wave sleep, muscle relaxation and antinociception. The protein is Gamma-aminobutyric acid type B receptor subunit 2 (GABBR2) of Homo sapiens (Human).